We begin with the raw amino-acid sequence, 575 residues long: Sclareol synthase, chloroplastic (575 aa).

The transit peptide at 1 to 51 (MSLAFNVGVTPFSGQRVGSRKEKFPVQGFPVTTPNRSRLIVNCSLTTIDFM) directs the protein to the chloroplast. Mg(2+) is bound by residues D329, D333, N473, S477, and E481. A DDXXD motif motif is present at residues 329-333 (DDFFD).

It belongs to the terpene synthase family.

The protein localises to the plastid. The protein resides in the chloroplast. The enzyme catalyses 8-hydroxycopalyl diphosphate + H2O = sclareol + diphosphate. The protein operates within secondary metabolite biosynthesis; terpenoid biosynthesis. In terms of biological role, involved in the biosynthesis of labdane-type diterpenoid including sclareol, a diterpene-diol that is used as fragrance and flavoring, and has anticancer effects (able to kill leukemic and colon cancer cells by apoptosis). Sclareol can also be used as synthesis precursor of ambergris substitution fragance products such as ambrox. Terpene synthase that catalyzes the conversion of 8-hydroxy-copalyl diphosphate to sclareol. The sequence is that of Sclareol synthase, chloroplastic from Salvia sclarea (Clary sage).